The primary structure comprises 298 residues: Acidic endochitinase (298 aa).

The signal sequence occupies residues 1 to 29 (MKPNMACLKQVSALLLPLLFISFFKPSHA). In terms of domain architecture, GH18 spans 30-298 (GGISVYWGQN…GYSGAIIGSV (269 aa)). Disulfide bonds link C49-C96 and C79-C86. The Proton donor role is filled by E156. C185 and C214 are disulfide-bonded.

The protein belongs to the glycosyl hydrolase 18 family. Chitinase class II subfamily.

The protein localises to the secreted. It localises to the extracellular space. The enzyme catalyses Random endo-hydrolysis of N-acetyl-beta-D-glucosaminide (1-&gt;4)-beta-linkages in chitin and chitodextrins.. Its function is as follows. This protein functions as a defense against chitin containing fungal pathogens. In Phaseolus angularis (Azuki bean), this protein is Acidic endochitinase.